The sequence spans 305 residues: Orotidine 5'-phosphate decarboxylase (305 aa).

Lys-108 functions as the Proton donor in the catalytic mechanism.

This sequence belongs to the OMP decarboxylase family. Type 2 subfamily.

The enzyme catalyses orotidine 5'-phosphate + H(+) = UMP + CO2. It participates in pyrimidine metabolism; UMP biosynthesis via de novo pathway; UMP from orotate: step 2/2. This Caldicellulosiruptor saccharolyticus (strain ATCC 43494 / DSM 8903 / Tp8T 6331) protein is Orotidine 5'-phosphate decarboxylase.